Here is a 225-residue protein sequence, read N- to C-terminus: Protein-L-isoaspartate O-methyltransferase (225 aa).

Serine 75 is a catalytic residue.

This sequence belongs to the methyltransferase superfamily. L-isoaspartyl/D-aspartyl protein methyltransferase family.

The protein localises to the cytoplasm. The catalysed reaction is [protein]-L-isoaspartate + S-adenosyl-L-methionine = [protein]-L-isoaspartate alpha-methyl ester + S-adenosyl-L-homocysteine. In terms of biological role, catalyzes the methyl esterification of L-isoaspartyl residues in peptides and proteins that result from spontaneous decomposition of normal L-aspartyl and L-asparaginyl residues. It plays a role in the repair and/or degradation of damaged proteins. This is Protein-L-isoaspartate O-methyltransferase from Stenotrophomonas maltophilia (strain R551-3).